Reading from the N-terminus, the 874-residue chain is Pyruvate, phosphate dikinase (874 aa).

The interval 2-340 (AKWVYKFEEG…LYFLQTRNGK (339 aa)) is N-terminal. Arg92 is an ATP binding site. Positions 340 to 399 (KRTAPAALQIACDLVDEGMITEEEAVVRIEAKSLDQLLHPTFNPAALKAGEVIGSALPAS) are linker 1. Positions 400-498 (PGAAAGKVYF…TFAEGDYISL (99 aa)) are central. A Phosphothreonine; by PDRP1 modification is found at Thr453. His455 serves as the catalytic Tele-phosphohistidine intermediate. Residues 499–533 (DGSTGKIYKGDIETQEASVSGSFERIMVWADKFRT) are linker 2. Residues 534 to 874 (LKVRTNADTP…AAAQAALNNK (341 aa)) are C-terminal. Substrate-binding residues include Arg561, Arg617, Glu745, Gly766, Thr767, Asn768, and Asp769. Residue Glu745 participates in Mg(2+) binding. Asp769 lines the Mg(2+) pocket. Cys831 functions as the Proton donor in the catalytic mechanism.

Belongs to the PEP-utilizing enzyme family. As to quaternary structure, homodimer. The cofactor is Mg(2+). Post-translationally, phosphorylation of Thr-453 in the dark inactivates the enzyme. Dephosphorylation upon light stimulation reactivates the enzyme.

It catalyses the reaction pyruvate + phosphate + ATP = phosphoenolpyruvate + AMP + diphosphate + H(+). Its activity is regulated as follows. Activated by light-induced dephosphorylation. Inhibited by dark-induced phosphorylation. Both reactions are catalyzed by PDRP1. Catalyzes the reversible phosphorylation of pyruvate and phosphate. In E.histolytica and C.symbiosus, PPDK functions in the direction of ATP synthesis. In Clostridium symbiosum (Bacteroides symbiosus), this protein is Pyruvate, phosphate dikinase (ppdK).